Reading from the N-terminus, the 86-residue chain is Protein P17 (86 aa).

The interval 63 to 86 (SPAEKPDNQPELTGITFEGDNNDQ) is disordered.

Homotetramer.

Its function is as follows. Assembly protein that acts late in phage assembly, after capsid protein folding and multimerization, and sorting of membrane proteins has occurred. The major coat protein P3 and two assembly factors (P10 and P17) are needed during the assembly of the virus particle inside the host cell, when the capsid protein multimers are capable of enclosing the host-derived membrane, containing the virus-encoded membrane-associated proteins. The polypeptide is Protein P17 (XVII) (Enterobacteria phage PRD1 (Bacteriophage PRD1)).